The sequence spans 417 residues: Pre-mRNA-splicing factor PRP46 (417 aa).

7 WD repeats span residues 119–159 (AHQG…LKAT), 162–201 (GHIMGVRSLAVSSRYPYLFSGSEDKTVKCWDLERTNSSSG), 209–248 (GHVGGIYAMALHPELDLLFTGGRDSVIRVWDLRSRTEIMV), 251–290 (GHRSDITSIASQIGDPQIITSSMDATIRLWDIRKATTQLA), 293–334 (HHSK…NEFG), 337–376 (GENKIINTLSINPSNNTLFSGYDDGRMEFYDYVSGDLLQS), and 385–417 (STESAIYASTFDMSGLRLITCEGDKSIKIWGEE).

It belongs to the WD repeat PRL1/PRL2 family. As to quaternary structure, associated with the spliceosome.

The protein localises to the cytoplasm. The protein resides in the nucleus. Involved in pre-mRNA splicing and required for cell cycle progression at G2/M. The protein is Pre-mRNA-splicing factor PRP46 (PRP46) of Debaryomyces hansenii (strain ATCC 36239 / CBS 767 / BCRC 21394 / JCM 1990 / NBRC 0083 / IGC 2968) (Yeast).